The sequence spans 198 residues: GTP-binding protein Di-Ras1 (198 aa).

Residues 17-22, 33-39, 61-65, 121-125, Ala151, and 151-152 each bind GTP; these read GVGKSS, RDTYIPT, DTTGS, NKCDE, and AK. The Effector region signature appears at 36-44; sequence YIPTIEDTY. At Cys195 the chain carries Cysteine methyl ester. A lipid anchor (S-geranylgeranyl cysteine) is attached at Cys195. Residues 196–198 constitute a propeptide, removed in mature form; it reads ALM.

The protein belongs to the small GTPase superfamily. Di-Ras family.

It is found in the cell membrane. In terms of biological role, displays low GTPase activity and exists predominantly in the GTP-bound form. This is GTP-binding protein Di-Ras1 (Diras1) from Mus musculus (Mouse).